We begin with the raw amino-acid sequence, 339 residues long: Protein RETICULATA-RELATED 2, chloroplastic (339 aa).

The N-terminal 58 residues, Met1–Pro58, are a transit peptide targeting the chloroplast. Over residues Ile68 to Gly86 the composition is skewed to gly residues. The interval Ile68 to Ser92 is disordered. The next 2 membrane-spanning stretches (helical) occupy residues Phe148–Ala168 and Val213–Ile233.

It belongs to the RETICULATA family.

The protein resides in the plastid. It localises to the chloroplast membrane. Functionally, may play a role in leaf development. The chain is Protein RETICULATA-RELATED 2, chloroplastic from Arabidopsis thaliana (Mouse-ear cress).